A 558-amino-acid chain; its full sequence is Dihydroxy-acid dehydratase (558 aa).

Residue aspartate 78 participates in Mg(2+) binding. Residue cysteine 119 coordinates [2Fe-2S] cluster. 2 residues coordinate Mg(2+): aspartate 120 and lysine 121. Lysine 121 bears the N6-carboxylysine mark. Cysteine 191 is a binding site for [2Fe-2S] cluster. Mg(2+) is bound at residue glutamate 443. The Proton acceptor role is filled by serine 469.

It belongs to the IlvD/Edd family. As to quaternary structure, homodimer. Requires [2Fe-2S] cluster as cofactor. Mg(2+) serves as cofactor.

It catalyses the reaction (2R)-2,3-dihydroxy-3-methylbutanoate = 3-methyl-2-oxobutanoate + H2O. It carries out the reaction (2R,3R)-2,3-dihydroxy-3-methylpentanoate = (S)-3-methyl-2-oxopentanoate + H2O. Its pathway is amino-acid biosynthesis; L-isoleucine biosynthesis; L-isoleucine from 2-oxobutanoate: step 3/4. It functions in the pathway amino-acid biosynthesis; L-valine biosynthesis; L-valine from pyruvate: step 3/4. In terms of biological role, functions in the biosynthesis of branched-chain amino acids. Catalyzes the dehydration of (2R,3R)-2,3-dihydroxy-3-methylpentanoate (2,3-dihydroxy-3-methylvalerate) into 2-oxo-3-methylpentanoate (2-oxo-3-methylvalerate) and of (2R)-2,3-dihydroxy-3-methylbutanoate (2,3-dihydroxyisovalerate) into 2-oxo-3-methylbutanoate (2-oxoisovalerate), the penultimate precursor to L-isoleucine and L-valine, respectively. The sequence is that of Dihydroxy-acid dehydratase from Solidesulfovibrio magneticus (strain ATCC 700980 / DSM 13731 / RS-1) (Desulfovibrio magneticus).